Here is a 328-residue protein sequence, read N- to C-terminus: Putative thiosulfate sulfurtransferase mpst-1 (328 aa).

Rhodanese domains lie at 22 to 162 and 202 to 320; these read NKEG…EVST and KTSE…KKIS. The active-site Cysteine persulfide intermediate is Cys278.

It catalyses the reaction thiosulfate + hydrogen cyanide = thiocyanate + sulfite + 2 H(+). In Caenorhabditis elegans, this protein is Putative thiosulfate sulfurtransferase mpst-1 (mpst-1).